Consider the following 1708-residue polypeptide: 187-kDa microtubule-associated protein AIR9 (1708 aa).

Residues 67 to 93 (SSLRVSGTTPVTIRRNSTGGVTENLAG) show a composition bias toward polar residues. The disordered stretch occupies residues 67–255 (SSLRVSGTTP…KTSTPESRDS (189 aa)). The segment covering 110-121 (DPVRRSLPELRK) has biased composition (basic and acidic residues). Low complexity predominate over residues 122 to 134 (SSVSSLSAKTVSK). The span at 149–165 (GSRSLTKSTGFSLSKPE) shows a compositional bias: polar residues. The span at 173-234 (SVSVSSKRAP…SIRSKSFSSP (62 aa)) shows a compositional bias: low complexity. 7 LRR repeats span residues 267–290 (AGDD…GLHL), 291–315 (SPNL…ILNR), 316–335 (VKVL…EPLE), 337–359 (CKML…LPQL), 360–382 (PNLE…SQPR), 384–402 (QVLA…FPYL), and 403–425 (PVLE…EAAS). A9 repeat units follow at residues 489-584 (PSGY…FAIS), 601-682 (LNGE…QYKY), 698-777 (ITGD…VSTS), 793-878 (IVGD…VYVL), 895-977 (ITGD…RSCM), 994-1073 (VVGA…AISE), 1090-1167 (FLGS…RSIR), 1183-1272 (IPDC…VVVI), 1287-1365 (VRVK…KMSE), 1382-1473 (FTGK…AYAE), and 1489-1569 (IEGQ…VSAS).

In terms of assembly, interacts with KCBP. Strongly expressed in dividing cells, like the meristemic region of the root tip.

It is found in the cytoplasm. The protein resides in the cell cortex. Its subcellular location is the cytoskeleton. It localises to the phragmoplast. In terms of biological role, microtubule-associated protein that may be involved in the maturation of cell plates and proper insertion of cross-walls after cytokinesis. This chain is 187-kDa microtubule-associated protein AIR9, found in Arabidopsis thaliana (Mouse-ear cress).